The sequence spans 183 residues: Dual-action ribosomal maturation protein DarP (183 aa).

This sequence belongs to the DarP family.

The protein localises to the cytoplasm. In terms of biological role, member of a network of 50S ribosomal subunit biogenesis factors which assembles along the 30S-50S interface, preventing incorrect 23S rRNA structures from forming. Promotes peptidyl transferase center (PTC) maturation. The sequence is that of Dual-action ribosomal maturation protein DarP from Citrobacter koseri (strain ATCC BAA-895 / CDC 4225-83 / SGSC4696).